We begin with the raw amino-acid sequence, 129 residues long: Small ribosomal subunit protein uS9 (129 aa).

A disordered region spans residues 97–129 (LKAQGFLTRDPRKKERKKYGRKKARKSFQFSKR). The span at 110–129 (KERKKYGRKKARKSFQFSKR) shows a compositional bias: basic residues.

The protein belongs to the universal ribosomal protein uS9 family.

This chain is Small ribosomal subunit protein uS9, found in Chlamydia trachomatis serovar A (strain ATCC VR-571B / DSM 19440 / HAR-13).